The primary structure comprises 445 residues: Methylenetetrahydrofolate--tRNA-(uracil-5-)-methyltransferase TrmFO (445 aa).

Residue 10-15 (GGGLSG) participates in FAD binding.

Belongs to the MnmG family. TrmFO subfamily. Requires FAD as cofactor.

The protein resides in the cytoplasm. The catalysed reaction is uridine(54) in tRNA + (6R)-5,10-methylene-5,6,7,8-tetrahydrofolate + NADH + H(+) = 5-methyluridine(54) in tRNA + (6S)-5,6,7,8-tetrahydrofolate + NAD(+). It catalyses the reaction uridine(54) in tRNA + (6R)-5,10-methylene-5,6,7,8-tetrahydrofolate + NADPH + H(+) = 5-methyluridine(54) in tRNA + (6S)-5,6,7,8-tetrahydrofolate + NADP(+). Its function is as follows. Catalyzes the folate-dependent formation of 5-methyl-uridine at position 54 (M-5-U54) in all tRNAs. This is Methylenetetrahydrofolate--tRNA-(uracil-5-)-methyltransferase TrmFO from Lawsonia intracellularis (strain PHE/MN1-00).